The primary structure comprises 243 residues: Protein-L-isoaspartate O-methyltransferase 2 (243 aa).

Residues D21 to R42 are disordered. The segment covering C23–R42 has biased composition (basic and acidic residues). S94 is a catalytic residue.

It belongs to the methyltransferase superfamily. L-isoaspartyl/D-aspartyl protein methyltransferase family.

It localises to the cytoplasm. It carries out the reaction [protein]-L-isoaspartate + S-adenosyl-L-methionine = [protein]-L-isoaspartate alpha-methyl ester + S-adenosyl-L-homocysteine. Functionally, catalyzes the methyl esterification of L-isoaspartyl residues in peptides and proteins that result from spontaneous decomposition of normal L-aspartyl and L-asparaginyl residues. It plays a role in the repair and/or degradation of damaged proteins. The protein is Protein-L-isoaspartate O-methyltransferase 2 of Anaeromyxobacter sp. (strain Fw109-5).